The sequence spans 463 residues: Secretogranin-3 (463 aa).

Residues 1–20 (MGPKYVFITAIIGVFWHVQG) form the signal peptide. 3 disordered regions span residues 87 to 111 (VKRSGSVRSSVGGHRGTLDDADSTK), 225 to 267 (DDDK…PEED), and 353 to 398 (EDKN…KGKA). Basic and acidic residues-rich tracts occupy residues 102–111 (GTLDDADSTK) and 229–262 (QEGKMETRNKNEDRESSETKNEDSFSSKERRNEL).

As to quaternary structure, interacts with CHGA. Interacts with secretogranin II/SCG2. Interacts (via C-terminus) with CPE.

It is found in the cytoplasmic vesicle. Its subcellular location is the secretory vesicle. The protein localises to the secretory vesicle membrane. The protein resides in the secreted. Member of the granin protein family that regulates the biogenesis of secretory granules. Acts as a sorting receptor for intragranular proteins including chromogranin A/CHGA. May also play a role in angiogenesis. Promotes endothelial proliferation, migration and tube formation through MEK/ERK signaling pathway. The sequence is that of Secretogranin-3 (scg3) from Xenopus tropicalis (Western clawed frog).